The following is a 120-amino-acid chain: Xibalbin-1 (120 aa).

The N-terminal stretch at 1 to 21 is a signal peptide; that stretch reads MISKILIAACALLLISHLVLA. A propeptide spanning residues 22–63 is cleaved from the precursor; it reads VPYLEDGLNSLHNRTGESDETRGYTIQLLKEMPEDDAVEDYS. Cystine bridges form between Cys-79–Cys-94, Cys-86–Cys-99, Cys-93–Cys-110, and Cys-101–Cys-108.

It belongs to the xibalbin-1 family. In terms of tissue distribution, expressed by the venom gland. Not found in the whole body.

Its subcellular location is the secreted. Probable neurotoxin. Strongly inhibits voltage-gated potassium channels (Kv1.1/KCNA1, Kv1.2/KCNA2, Kv1.3/KCNA3, and Kv1.6/KCNA6, with the highest toxicity against Kv1.6 (74% inhibition at 1 uM)) and mildly inhibits sodium channels (Nav1.2/SCN2A, Nav1.4/SCN4A, Nav1.5/SCN5A, Nav1.6/SCN8A, and BgNav). Induces activation of protein kinase A type II (PKA-II) and MAP kinase Erk1/2 in primary nociceptive and non-nociceptive sensory neurons. Does not show cytotoxic activity. Does not have an impact on Ca2+, cAMP, and NO signaling in the cell types analyzed. Does not interfere with the adhesion of leukocytes to endothelial cells. The polypeptide is Xibalbin-1 (Xibalbanus tulumensis (Blind cave remipede)).